The following is a 127-amino-acid chain: ATP synthase epsilon chain (127 aa).

It belongs to the ATPase epsilon chain family. F-type ATPases have 2 components, CF(1) - the catalytic core - and CF(0) - the membrane proton channel. CF(1) has five subunits: alpha(3), beta(3), gamma(1), delta(1), epsilon(1). CF(0) has three main subunits: a, b and c.

The protein resides in the cell inner membrane. In terms of biological role, produces ATP from ADP in the presence of a proton gradient across the membrane. The chain is ATP synthase epsilon chain from Leptospira interrogans serogroup Icterohaemorrhagiae serovar copenhageni (strain Fiocruz L1-130).